The sequence spans 273 residues: 2-dehydro-3-deoxyphosphooctonate aldolase (273 aa).

This sequence belongs to the KdsA family.

The protein resides in the cytoplasm. It catalyses the reaction D-arabinose 5-phosphate + phosphoenolpyruvate + H2O = 3-deoxy-alpha-D-manno-2-octulosonate-8-phosphate + phosphate. It participates in carbohydrate biosynthesis; 3-deoxy-D-manno-octulosonate biosynthesis; 3-deoxy-D-manno-octulosonate from D-ribulose 5-phosphate: step 2/3. It functions in the pathway bacterial outer membrane biogenesis; lipopolysaccharide biosynthesis. This Desulfatibacillum aliphaticivorans protein is 2-dehydro-3-deoxyphosphooctonate aldolase.